A 131-amino-acid chain; its full sequence is Small ribosomal subunit protein bS16 (131 aa).

A disordered region spans residues 87–131 (PGAEGTYRVPTANTKPPRIPGGGAAKAVEAPAEAPAEAETPASES). A compositionally biased stretch (low complexity) spans 111–131 (AKAVEAPAEAPAEAETPASES).

Belongs to the bacterial ribosomal protein bS16 family.

The sequence is that of Small ribosomal subunit protein bS16 from Kineococcus radiotolerans (strain ATCC BAA-149 / DSM 14245 / SRS30216).